Consider the following 361-residue polypeptide: Phosphoserine aminotransferase (361 aa).

Arg42 serves as a coordination point for L-glutamate. Residues 76-77 (AR), Trp102, Thr153, Asp173, and Gln196 contribute to the pyridoxal 5'-phosphate site. The residue at position 197 (Lys197) is an N6-(pyridoxal phosphate)lysine. Position 238–239 (238–239 (NT)) interacts with pyridoxal 5'-phosphate.

Belongs to the class-V pyridoxal-phosphate-dependent aminotransferase family. SerC subfamily. In terms of assembly, homodimer. The cofactor is pyridoxal 5'-phosphate.

The protein localises to the cytoplasm. It carries out the reaction O-phospho-L-serine + 2-oxoglutarate = 3-phosphooxypyruvate + L-glutamate. It catalyses the reaction 4-(phosphooxy)-L-threonine + 2-oxoglutarate = (R)-3-hydroxy-2-oxo-4-phosphooxybutanoate + L-glutamate. It participates in amino-acid biosynthesis; L-serine biosynthesis; L-serine from 3-phospho-D-glycerate: step 2/3. Its pathway is cofactor biosynthesis; pyridoxine 5'-phosphate biosynthesis; pyridoxine 5'-phosphate from D-erythrose 4-phosphate: step 3/5. Catalyzes the reversible conversion of 3-phosphohydroxypyruvate to phosphoserine and of 3-hydroxy-2-oxo-4-phosphonooxybutanoate to phosphohydroxythreonine. This Yersinia enterocolitica serotype O:8 / biotype 1B (strain NCTC 13174 / 8081) protein is Phosphoserine aminotransferase.